The chain runs to 306 residues: MREKEPSGLLVLDKPEGMTSSTLVTRVKRLLGLRKAGHCGTLDPFATGVLLVCVNQATRFAEQLTGQTKVYRFTARLGIETDTLDRTGTVVRTRDDVVPSERELLEAVRLHEGTQVQEVPRYAAVKVQGKRLYELARKGIDVELPRREVHIHRFDLISYRYPEVVLETKCSKGTYVRQLAADLGRRLGCGAHVMHLRRLACGPFGLERASSLEQMHDGASDGSWLAKLVPMADALSHLPALTIEDGQVLSRLRYGQLDADWEAEHSGRFSRRVGPVRIVTADGRLAALWWPWPESEHQRRLRVFQL.

The active-site Nucleophile is the Asp43.

It belongs to the pseudouridine synthase TruB family. Type 1 subfamily.

It catalyses the reaction uridine(55) in tRNA = pseudouridine(55) in tRNA. Functionally, responsible for synthesis of pseudouridine from uracil-55 in the psi GC loop of transfer RNAs. This Syntrophobacter fumaroxidans (strain DSM 10017 / MPOB) protein is tRNA pseudouridine synthase B.